The sequence spans 730 residues: uncharacterized protein (730 aa).

The segment covering 615–625 (FDKENSFDPSD) has biased composition (basic and acidic residues). 2 disordered regions span residues 615–667 (FDKE…SSFS) and 684–730 (KSGS…FGKI). Composition is skewed to low complexity over residues 653–667 (SSSS…SSFS) and 684–701 (KSGS…NSSS). Over residues 713–723 (KKKKKKKKKKS) the composition is skewed to basic residues.

This is an uncharacterized protein from Saccharomyces cerevisiae (strain ATCC 204508 / S288c) (Baker's yeast).